Reading from the N-terminus, the 421-residue chain is Mannose-1-phosphate guanyltransferase alpha-A (421 aa).

This sequence belongs to the transferase hexapeptide repeat family.

The catalysed reaction is alpha-D-mannose 1-phosphate + GTP + H(+) = GDP-alpha-D-mannose + diphosphate. It participates in nucleotide-sugar biosynthesis; GDP-alpha-D-mannose biosynthesis; GDP-alpha-D-mannose from alpha-D-mannose 1-phosphate (GTP route): step 1/1. The sequence is that of Mannose-1-phosphate guanyltransferase alpha-A (gmppa-a) from Xenopus laevis (African clawed frog).